A 441-amino-acid chain; its full sequence is Malate dehydrogenase [NADP], chloroplastic (441 aa).

The N-terminal 58 residues, 1–58, are a transit peptide targeting the chloroplast; it reads MALTQLNSTCSKPQLHSSSQLSFLSRTRTRTLPRHYHSTFAPLHRTQHARISCSVAPN. An intrachain disulfide couples C76 to C81. An NADP(+)-binding site is contributed by 105–111; that stretch reads GAAGMIS. The substrate site is built by R186 and R192. Residue N199 coordinates NADP(+). Q206 lines the NAD(+) pocket. 223 to 225 provides a ligand contact to NADP(+); the sequence is VGN. The substrate site is built by N225 and R256. H281 (proton acceptor) is an active-site residue. Residues C417 and C429 are joined by a disulfide bond.

It belongs to the LDH/MDH superfamily. MDH type 2 family. In terms of assembly, homodimer.

It localises to the plastid. The protein localises to the chloroplast. It carries out the reaction (S)-malate + NADP(+) = oxaloacetate + NADPH + H(+). Chloroplast NADP-MDH is activated upon illumination. In order to be enzymatically active, disulfide bridges on the protein must be reduced by thioredoxin which receives electrons from ferredoxin and the electron transport system of photosynthesis. The chloroplastic, NADP-dependent form is essential for the photosynthesis C4 cycle, which allows plants to circumvent the problem of photorespiration. In C4 plants, NADP-MDH activity acts to convert oxaloacetate to malate in chloroplasts of mesophyll cells for transport to the bundle sheath cells. This is Malate dehydrogenase [NADP], chloroplastic from Pisum sativum (Garden pea).